The following is a 473-amino-acid chain: Photosystem II CP43 reaction center protein (473 aa).

The propeptide occupies 1–14; the sequence is MKTLYSLRRFYPVE. Threonine 15 is modified (N-acetylthreonine). Threonine 15 bears the Phosphothreonine mark. 5 helical membrane passes run 69–93, 134–155, 178–200, 255–275, and 291–312; these read LFEV…PHLA, LLGP…KDRN, KALY…RKIT, KPFA…LSYS, and WFNN…ASQA. Glutamate 367 contributes to the [CaMn4O5] cluster binding site. The helical transmembrane segment at 447 to 471 threads the bilayer; the sequence is RARAAAAGFEKGIDRDFEPALSMTP.

It belongs to the PsbB/PsbC family. PsbC subfamily. As to quaternary structure, PSII is composed of 1 copy each of membrane proteins PsbA, PsbB, PsbC, PsbD, PsbE, PsbF, PsbH, PsbI, PsbJ, PsbK, PsbL, PsbM, PsbT, PsbX, PsbY, PsbZ, Psb30/Ycf12, at least 3 peripheral proteins of the oxygen-evolving complex and a large number of cofactors. It forms dimeric complexes. It depends on Binds multiple chlorophylls and provides some of the ligands for the Ca-4Mn-5O cluster of the oxygen-evolving complex. It may also provide a ligand for a Cl- that is required for oxygen evolution. PSII binds additional chlorophylls, carotenoids and specific lipids. as a cofactor.

It localises to the plastid. The protein localises to the chloroplast thylakoid membrane. Its function is as follows. One of the components of the core complex of photosystem II (PSII). It binds chlorophyll and helps catalyze the primary light-induced photochemical processes of PSII. PSII is a light-driven water:plastoquinone oxidoreductase, using light energy to abstract electrons from H(2)O, generating O(2) and a proton gradient subsequently used for ATP formation. The chain is Photosystem II CP43 reaction center protein from Oenothera argillicola (Appalachian evening primrose).